The sequence spans 542 residues: CTP synthase (542 aa).

The interval 1 to 265 (MARYVFITGG…DSEVLSAFGM (265 aa)) is amidoligase domain. Ser13 contributes to the CTP binding site. Ser13 is a UTP binding site. Position 14-19 (14-19 (SLGKGI)) interacts with ATP. L-glutamine is bound at residue Tyr54. Asp71 provides a ligand contact to ATP. Positions 71 and 139 each coordinate Mg(2+). CTP is bound by residues 146–148 (DIE), 186–191 (KTKPTQ), and Lys222. Residues 186 to 191 (KTKPTQ) and Lys222 contribute to the UTP site. A Glutamine amidotransferase type-1 domain is found at 291–541 (TIAVVGKYTG…IEATVEQSRL (251 aa)). Ala353 provides a ligand contact to L-glutamine. The active-site Nucleophile; for glutamine hydrolysis is Cys380. Residues 381-384 (FGMQ), Glu404, and Arg469 contribute to the L-glutamine site. Residues His514 and Glu516 contribute to the active site.

The protein belongs to the CTP synthase family. As to quaternary structure, homotetramer.

It catalyses the reaction UTP + L-glutamine + ATP + H2O = CTP + L-glutamate + ADP + phosphate + 2 H(+). The enzyme catalyses L-glutamine + H2O = L-glutamate + NH4(+). The catalysed reaction is UTP + NH4(+) + ATP = CTP + ADP + phosphate + 2 H(+). Its pathway is pyrimidine metabolism; CTP biosynthesis via de novo pathway; CTP from UDP: step 2/2. With respect to regulation, allosterically activated by GTP, when glutamine is the substrate; GTP has no effect on the reaction when ammonia is the substrate. The allosteric effector GTP functions by stabilizing the protein conformation that binds the tetrahedral intermediate(s) formed during glutamine hydrolysis. Inhibited by the product CTP, via allosteric rather than competitive inhibition. In terms of biological role, catalyzes the ATP-dependent amination of UTP to CTP with either L-glutamine or ammonia as the source of nitrogen. Regulates intracellular CTP levels through interactions with the four ribonucleotide triphosphates. The protein is CTP synthase of Bartonella henselae (strain ATCC 49882 / DSM 28221 / CCUG 30454 / Houston 1) (Rochalimaea henselae).